The sequence spans 897 residues: High molecular weight rhoptry protein 3 (897 aa).

The N-terminal stretch at 1–24 (MRSKHLVTLFIITFLSFSTVKVWG) is a signal peptide. 5 disulfides stabilise this stretch: Cys157–Cys231, Cys244–Cys253, Cys262–Cys276, Cys421–Cys620, and Cys475–Cys536. Residues 597 to 615 (FVLYFISIISVLYINEYYY) form a helical membrane-spanning segment. Disordered regions lie at residues 788 to 845 (KEQS…SNLK) and 859 to 897 (QLDK…ENEL). Residues 792 to 801 (KSTSAASTSD) are compositionally biased toward polar residues. Over residues 802–817 (EISGSEGPSTESTSTG) the composition is skewed to low complexity. Ser804 bears the Phosphoserine; by CDPK1 mark. Basic and acidic residues predominate over residues 820-832 (GEDKTTDNTYKEM). Positions 865–876 (PKKKKSKRKKKR) are enriched in basic residues. Positions 877–889 (DSSSDRILLEESK) are enriched in basic and acidic residues.

Component of the RhopH complex. RhopH complex is composed of CLAG3.1/CLAG3.2, RhopH2 and RhopH3 with a 1:1:1 subunit stoichiometry. Interacts with CLAG3.1/CLAG3.2. Interacts with CDPK1; the interaction promotes RhopH3 phosphorylation in merozoites. In terms of processing, proteolytically cleaved near C-terminus.

It is found in the host cell membrane. Its subcellular location is the parasitophorous vacuole membrane. The protein resides in the cytoplasm. It localises to the cytoplasmic vesicle. The protein localises to the secretory vesicle. It is found in the rhoptry. Functionally, participates in the formation of new permeability pathways in Plasmodium-infected erythrocytes enabling the uptake of nutrients from the blood plasma. Required for maintaining invasion capacity of merozoites. Required for the trophozoite to schizont developmental transition of the intracellular parasite. This Plasmodium falciparum (isolate 3D7) protein is High molecular weight rhoptry protein 3.